The chain runs to 390 residues: Zinc transporter 8 (390 aa).

The signal sequence occupies residues 1-25; it reads MRTNTTATVLLAAAVALLLATAARG. N-linked (GlcNAc...) asparagine glycosylation is present at asparagine 4. The Extracellular portion of the chain corresponds to 26 to 50; that stretch reads DGGDGGCGKEDAAAGRDRARARGLK. A helical transmembrane segment spans residues 51-71; the sequence is IAAFFSILVCGALGCGLPSLG. The Cytoplasmic portion of the chain corresponds to 72–82; that stretch reads RHVPALRPDGD. Residues 83 to 103 traverse the membrane as a helical segment; the sequence is VFFLVKAFAAGVILATGFIHI. Residues 104–124 lie on the Extracellular side of the membrane; sequence LPDAFDNLTDDCLPAGGPWKE. Asparagine 110 carries an N-linked (GlcNAc...) asparagine glycan. Residues 125–145 form a helical membrane-spanning segment; the sequence is FPFAGFGAMVGAIGTLVVDTL. Residues 146 to 235 lie on the Cytoplasmic side of the membrane; the sequence is ATGYFTRALS…DDKETTLRHR (90 aa). The segment at 165-199 is disordered; it reads VADEEKQSAAATQQHNHHHNHHVVGDGGGGGEEHE. A helical membrane pass occupies residues 236-256; the sequence is VISQVLELGIVVHSVIIGISL. Residues 257 to 267 lie on the Extracellular side of the membrane; sequence GASQNPETIKP. A helical transmembrane segment spans residues 268-288; that stretch reads LVVALSFHQMFEGMGLGGCIV. Topologically, residues 289–296 are cytoplasmic; that stretch reads QAKFKVRS. A helical membrane pass occupies residues 297-317; it reads IVTMVLFFCLTTPVGIAVGVG. Residues 318–329 are Extracellular-facing; that stretch reads ISSVYNESSPTA. An N-linked (GlcNAc...) asparagine glycan is attached at asparagine 323. Residues 330–350 form a helical membrane-spanning segment; sequence LVVEGILNSVAAGILIYMALV. Residues 351–369 are Cytoplasmic-facing; it reads DLLAEDFMNPRVQSKGKLQ. A helical membrane pass occupies residues 370-390; sequence LGINLAMLAGAGLMSMLAKWA.

Belongs to the ZIP transporter (TC 2.A.5) family.

It localises to the cell membrane. In terms of biological role, zinc transporter that may mediate zinc uptake from the rhizosphere and may be responsible for the translocation of zinc within the plant. This chain is Zinc transporter 8 (ZIP8), found in Oryza sativa subsp. japonica (Rice).